The primary structure comprises 270 residues: Pancreas transcription factor 1 subunit alpha (270 aa).

The bHLH domain occupies 119 to 171 (QLRQAANVRERRRMQSINDAFEGLRSHIPTLPYEKRLSKVDTLRLAIGYINFL).

The protein resides in the nucleus. Functionally, transcription factor implicated in the cell fate determination in various organs. Binds to the E-box consensus sequence 5'-CANNTG-3'. Acts together with pdx1 to induce the pancreatic lineage within the endoderm. Plays a central role in directing the differentiation of retinal progenitors towards horizontal and amacrine fates. The protein is Pancreas transcription factor 1 subunit alpha (ptf1a) of Xenopus laevis (African clawed frog).